The chain runs to 329 residues: Bifunctional nuclease 2 (329 aa).

Residues 121 to 256 (CVHNNPQGGN…YLAYSDGMRV (136 aa)) enclose the BFN domain. The region spanning 287–322 (DTKEFDLVRNMMQAVDEERYDEAAEWRDKLGKFQAK) is the UVR domain.

This sequence belongs to the bifunctional nuclease family.

It is found in the nucleus. Bifunctional nuclease with both RNase and DNase activities. Involved in basal defense response. Participates in abscisic acid-derived callose deposition following infection by a necrotrophic pathogen. This chain is Bifunctional nuclease 2 (BBD2), found in Arabidopsis thaliana (Mouse-ear cress).